A 375-amino-acid polypeptide reads, in one-letter code: Queuine tRNA-ribosyltransferase (375 aa).

D89 functions as the Proton acceptor in the catalytic mechanism. Substrate-binding positions include 89-93 (DSGGF), D143, Q187, and G214. Positions 245–251 (GVGKPED) are RNA binding. Residue D264 is the Nucleophile of the active site. The interval 269–273 (TRNAR) is RNA binding; important for wobble base 34 recognition. Zn(2+) contacts are provided by C302, C304, C307, and H333.

The protein belongs to the queuine tRNA-ribosyltransferase family. In terms of assembly, homodimer. Within each dimer, one monomer is responsible for RNA recognition and catalysis, while the other monomer binds to the replacement base PreQ1. Zn(2+) is required as a cofactor.

The catalysed reaction is 7-aminomethyl-7-carbaguanine + guanosine(34) in tRNA = 7-aminomethyl-7-carbaguanosine(34) in tRNA + guanine. The protein operates within tRNA modification; tRNA-queuosine biosynthesis. In terms of biological role, catalyzes the base-exchange of a guanine (G) residue with the queuine precursor 7-aminomethyl-7-deazaguanine (PreQ1) at position 34 (anticodon wobble position) in tRNAs with GU(N) anticodons (tRNA-Asp, -Asn, -His and -Tyr). Catalysis occurs through a double-displacement mechanism. The nucleophile active site attacks the C1' of nucleotide 34 to detach the guanine base from the RNA, forming a covalent enzyme-RNA intermediate. The proton acceptor active site deprotonates the incoming PreQ1, allowing a nucleophilic attack on the C1' of the ribose to form the product. After dissociation, two additional enzymatic reactions on the tRNA convert PreQ1 to queuine (Q), resulting in the hypermodified nucleoside queuosine (7-(((4,5-cis-dihydroxy-2-cyclopenten-1-yl)amino)methyl)-7-deazaguanosine). This chain is Queuine tRNA-ribosyltransferase, found in Salmonella choleraesuis (strain SC-B67).